A 695-amino-acid chain; its full sequence is Protein-glutamine gamma-glutamyltransferase 2 (695 aa).

Residues Cys-272, His-332, and Asp-355 contribute to the active site. Positions 395, 397, 434, 444, and 449 each coordinate Ca(2+). GTP contacts are provided by residues Ser-476–Pro-482 and Ala-578–Pro-581.

It belongs to the transglutaminase superfamily. Transglutaminase family. As to quaternary structure, monomer. Ca(2+) is required as a cofactor.

It localises to the cytoplasm. Its subcellular location is the cytosol. The protein resides in the nucleus. The protein localises to the chromosome. It is found in the secreted. It localises to the extracellular space. Its subcellular location is the extracellular matrix. The protein resides in the cell membrane. The protein localises to the mitochondrion. The catalysed reaction is L-glutaminyl-[protein] + L-lysyl-[protein] = [protein]-L-lysyl-N(6)-5-L-glutamyl-[protein] + NH4(+). It catalyses the reaction L-glutaminyl-[protein] + serotonin = 5-serotonyl-L-glutamyl-[protein] + NH4(+). The enzyme catalyses L-glutaminyl-[protein] + dopamine = 5-dopaminyl-L-glutamyl-[protein] + NH4(+). It carries out the reaction L-glutaminyl-[protein] + histamine = 5-histaminyl-L-glutamyl-[protein] + NH4(+). The catalysed reaction is L-glutaminyl-[protein] + (R)-noradrenaline = 5-(R)-noradrenalinyl-L-glutamyl-[protein] + NH4(+). It catalyses the reaction L-glutaminyl-[protein] + H2O = L-glutamyl-[protein] + NH4(+). Acyltransferase activity is regulated by the binding of GTP and Ca(2+): inactivated by GTP, which stabilizes its closed structure, thereby obstructing the accessibility of substrates to the active sites. In contrast, Ca(2+) acts as a cofactor by inducing conformational change to the active open form. In absence of Ca(2+), Mg(2+) may bind Ca(2+)-binding sites, promoting GTP-binding and subsequent inhibition of the acyltransferase activity. Its function is as follows. Calcium-dependent acyltransferase that catalyzes the formation of covalent bonds between peptide-bound glutamine and various primary amines, such as gamma-amino group of peptide-bound lysine, or mono- and polyamines, thereby producing cross-linked or aminated proteins, respectively. Involved in many biological processes, such as bone development, angiogenesis, wound healing, cellular differentiation, chromatin modification and apoptosis. Acts as a protein-glutamine gamma-glutamyltransferase by mediating the cross-linking of proteins: under physiological conditions, the protein cross-linking activity is inhibited by GTP; inhibition is relieved by Ca(2+) in response to various stresses. When secreted, catalyzes cross-linking of proteins of the extracellular matrix, resulting in the formation of scaffolds. Plays a key role during apoptosis, both by (1) promoting the cross-linking of cytoskeletal proteins resulting in condensation of the cytoplasm, and by (2) mediating cross-linking proteins of the extracellular matrix, resulting in the irreversible formation of scaffolds that stabilize the integrity of the dying cells before their clearance by phagocytosis, thereby preventing the leakage of harmful intracellular components. In addition to protein cross-linking, can use different monoamine substrates to catalyze a vast array of protein post-translational modifications: mediates aminylation of serotonin, dopamine, noradrenaline or histamine into glutamine residues of target proteins to generate protein serotonylation, dopaminylation, noradrenalinylation or histaminylation, respectively. Mediates protein serotonylation of small GTPases during activation and aggregation of platelets, leading to constitutive activation of these GTPases. Plays a key role in chromatin organization by mediating serotonylation and dopaminylation of histone H3. Catalyzes serotonylation of 'Gln-5' of histone H3 (H3Q5ser) during serotonergic neuron differentiation, thereby facilitating transcription. Acts as a mediator of neurotransmission-independent role of nuclear dopamine in ventral tegmental area (VTA) neurons: catalyzes dopaminylation of 'Gln-5' of histone H3 (H3Q5dop), thereby regulating relapse-related transcriptional plasticity in the reward system. Also acts as a protein deamidase by mediating the side chain deamidation of specific glutamine residues of proteins to glutamate. May also act as an isopeptidase cleaving the previously formed cross-links. Also able to participate in signaling pathways independently of its acyltransferase activity: acts as a signal transducer in alpha-1 adrenergic receptor-mediated stimulation of phospholipase C-delta (PLCD) activity and is required for coupling alpha-1 adrenergic agonists to the stimulation of phosphoinositide lipid metabolism. This chain is Protein-glutamine gamma-glutamyltransferase 2, found in Pagrus major (Red sea bream).